The primary structure comprises 956 residues: Endogenous retrovirus group K member 8 Pol protein (956 aa).

The 189-residue stretch at 57 to 245 folds into the Reverse transcriptase domain; it reads LEKGHIEPSF…TPFHYLGMQI (189 aa). Residues 161–164 carry the LPQG motif; it reads LPQG. The YXDD motif lies at 195–198; sequence YIDD. Residues 460-590 enclose the RNase H type-1 domain; the sequence is LENALTVFTD…ADLLVSSALI (131 aa). Asp469, Glu497, Asp517, and Asp582 together coordinate Mg(2+). Residues 587–628 form an Integrase-type zinc finger; the sequence is SALIKAQELHALTHVNAAGLKNKFDVTWKQAKDIVQHCTQCQ. Zn(2+) contacts are provided by His596, His600, Cys624, and Cys627. The Integrase catalytic domain occupies 642–803; the sequence is RGLCPNALWQ…TSAEQHLTGK (162 aa). Positions 811–859 form a DNA-binding region, integrase-type; the sequence is KLIWWKDNKNKTWEIGKVITWGRGFACVSPGENQLPVWIPTRHLKFYNE. The tract at residues 864 to 890 is disordered; sequence AKKSTSAETETPQSSTVDSQDEQNGDV. Positions 869–881 are enriched in polar residues; it reads SAETETPQSSTVD.

This sequence belongs to the beta type-B retroviral polymerase family. HERV class-II K(HML-2) pol subfamily.

The enzyme catalyses DNA(n) + a 2'-deoxyribonucleoside 5'-triphosphate = DNA(n+1) + diphosphate. The catalysed reaction is Endonucleolytic cleavage to 5'-phosphomonoester.. Functionally, early post-infection, the reverse transcriptase converts the viral RNA genome into double-stranded viral DNA. The RNase H domain of the reverse transcriptase performs two functions. It degrades the RNA template and specifically removes the RNA primer from the RNA/DNA hybrid. Following nuclear import, the integrase catalyzes the insertion of the linear, double-stranded viral DNA into the host cell chromosome. Endogenous Pol proteins may have kept, lost or modified their original function during evolution. The protein is Endogenous retrovirus group K member 8 Pol protein (ERVK-8) of Homo sapiens (Human).